The sequence spans 401 residues: 4-hydroxy-3-methylbut-2-enyl diphosphate reductase (401 aa).

Cys-66 contributes to the [4Fe-4S] cluster binding site. His-96 contacts (2E)-4-hydroxy-3-methylbut-2-enyl diphosphate. His-96 provides a ligand contact to dimethylallyl diphosphate. Residue His-96 coordinates isopentenyl diphosphate. Cys-157 lines the [4Fe-4S] cluster pocket. His-185 is a binding site for (2E)-4-hydroxy-3-methylbut-2-enyl diphosphate. His-185 lines the dimethylallyl diphosphate pocket. His-185 is an isopentenyl diphosphate binding site. Catalysis depends on Glu-187, which acts as the Proton donor. Thr-250 lines the (2E)-4-hydroxy-3-methylbut-2-enyl diphosphate pocket. Cys-288 lines the [4Fe-4S] cluster pocket. Ser-317, Ser-318, Asn-319, and Ser-381 together coordinate (2E)-4-hydroxy-3-methylbut-2-enyl diphosphate. 4 residues coordinate dimethylallyl diphosphate: Ser-317, Ser-318, Asn-319, and Ser-381. Ser-317, Ser-318, Asn-319, and Ser-381 together coordinate isopentenyl diphosphate.

It belongs to the IspH family. It depends on [4Fe-4S] cluster as a cofactor.

It catalyses the reaction isopentenyl diphosphate + 2 oxidized [2Fe-2S]-[ferredoxin] + H2O = (2E)-4-hydroxy-3-methylbut-2-enyl diphosphate + 2 reduced [2Fe-2S]-[ferredoxin] + 2 H(+). The enzyme catalyses dimethylallyl diphosphate + 2 oxidized [2Fe-2S]-[ferredoxin] + H2O = (2E)-4-hydroxy-3-methylbut-2-enyl diphosphate + 2 reduced [2Fe-2S]-[ferredoxin] + 2 H(+). It participates in isoprenoid biosynthesis; dimethylallyl diphosphate biosynthesis; dimethylallyl diphosphate from (2E)-4-hydroxy-3-methylbutenyl diphosphate: step 1/1. Its pathway is isoprenoid biosynthesis; isopentenyl diphosphate biosynthesis via DXP pathway; isopentenyl diphosphate from 1-deoxy-D-xylulose 5-phosphate: step 6/6. Its function is as follows. Catalyzes the conversion of 1-hydroxy-2-methyl-2-(E)-butenyl 4-diphosphate (HMBPP) into a mixture of isopentenyl diphosphate (IPP) and dimethylallyl diphosphate (DMAPP). Acts in the terminal step of the DOXP/MEP pathway for isoprenoid precursor biosynthesis. The sequence is that of 4-hydroxy-3-methylbut-2-enyl diphosphate reductase from Prochlorococcus marinus (strain NATL1A).